Here is a 206-residue protein sequence, read N- to C-terminus: U-scoloptoxin(08)-Cw1a (206 aa).

The N-terminal stretch at 1-24 (MIFRVNLLFSCFCFVLFVFDFSNA) is a signal peptide. A propeptide spanning residues 25–164 (SKYDQGSLNI…DLPELKRRKR (140 aa)) is cleaved from the precursor. The RLWRNWE 1; approximate repeat unit spans residues 37-43 (RLWRDWE). An RLWRNWE 2; approximate repeat occupies 71–77 (RLWRDWE). Residues 104–110 (RLWRDWE) form an RLWRNWE 3; approximate repeat. An RLWRNWE 4 repeat occupies 137–143 (RLWRNWE). The stretch at 164–170 (RLWRNED) is one RLWRNWE 5; approximate repeat.

This sequence belongs to the scoloptoxin-08 family. In terms of processing, contains 3 disulfide bonds. As to expression, expressed by the venom gland.

It is found in the secreted. This chain is U-scoloptoxin(08)-Cw1a, found in Cormocephalus westwoodi (Westwood's green centipede).